The sequence spans 241 residues: Methylthioribulose-1-phosphate dehydratase (241 aa).

The disordered stretch occupies residues Met1 to Glu20. Cys100 provides a ligand contact to substrate. The Zn(2+) site is built by His117 and His119. Glu146 functions as the Proton donor/acceptor in the catalytic mechanism. His202 provides a ligand contact to Zn(2+).

It belongs to the aldolase class II family. MtnB subfamily. Requires Zn(2+) as cofactor.

The protein localises to the cytoplasm. The enzyme catalyses 5-(methylsulfanyl)-D-ribulose 1-phosphate = 5-methylsulfanyl-2,3-dioxopentyl phosphate + H2O. It functions in the pathway amino-acid biosynthesis; L-methionine biosynthesis via salvage pathway; L-methionine from S-methyl-5-thio-alpha-D-ribose 1-phosphate: step 2/6. Its function is as follows. Catalyzes the dehydration of methylthioribulose-1-phosphate (MTRu-1-P) into 2,3-diketo-5-methylthiopentyl-1-phosphate (DK-MTP-1-P). This is Methylthioribulose-1-phosphate dehydratase from Blastomyces gilchristii (strain SLH14081) (Blastomyces dermatitidis).